Consider the following 289-residue polypeptide: dTDP-rhamnosyl transferase RfbG (289 aa).

This sequence belongs to the glycosyltransferase 2 family.

The protein operates within bacterial outer membrane biogenesis; lipopolysaccharide biosynthesis. This Shigella flexneri protein is dTDP-rhamnosyl transferase RfbG (rfbG).